A 118-amino-acid chain; its full sequence is Large ribosomal subunit protein uL18 (118 aa).

The protein belongs to the universal ribosomal protein uL18 family. In terms of assembly, part of the 50S ribosomal subunit; part of the 5S rRNA/L5/L18/L25 subcomplex. Contacts the 5S and 23S rRNAs.

This is one of the proteins that bind and probably mediate the attachment of the 5S RNA into the large ribosomal subunit, where it forms part of the central protuberance. This Lactobacillus acidophilus (strain ATCC 700396 / NCK56 / N2 / NCFM) protein is Large ribosomal subunit protein uL18.